The following is a 178-amino-acid chain: MREFRLIFVLLFFLPSFAIANTEIINVETGDSNKLLTSNSVCDIELSNNSSIPLLLKPNPTIPQAAGAPQQSKYTFSVCGLKPLQKYQIRASWPAVYPSDIILNYNITHIIVEINASFYSHNESLMKRPPLVPLRLVVEPLLLGFLPKSVLPIVGFVFVIILIALICMTNLFIKHKRD.

A signal peptide spans 1–20 (MREFRLIFVLLFFLPSFAIA). The Lumenal segment spans residues 21–152 (NTEIINVETG…LGFLPKSVLP (132 aa)). N48, N49, N106, N115, and N122 each carry an N-linked (GlcNAc...) asparagine glycan. The helical transmembrane segment at 153-173 (IVGFVFVIILIALICMTNLFI) threads the bilayer. Residues 174 to 178 (KHKRD) lie on the Cytoplasmic side of the membrane.

As to quaternary structure, part of the GPI mannosyltransferase 2 complex composed of gpi18 and C167.09.

It localises to the endoplasmic reticulum membrane. It functions in the pathway glycolipid biosynthesis; glycosylphosphatidylinositol-anchor biosynthesis. Essential component of the GPI mannosyltransferase 2 complex. Responsible for the transfer of the second mannose to the glycosylphosphatidylinositol during GPI precursor assembly. The protein is GPI mannosyltransferase 2 subunit C167.09 of Schizosaccharomyces pombe (strain 972 / ATCC 24843) (Fission yeast).